Consider the following 482-residue polypeptide: Catalase easC (482 aa).

Histidine 58 is a catalytic residue. Residue tyrosine 347 coordinates heme.

This sequence belongs to the catalase family. Heme serves as cofactor.

The protein operates within alkaloid biosynthesis; ergot alkaloid biosynthesis. Its function is as follows. Catalase; part of the gene cluster that mediates the biosynthesis of fungal ergot alkaloid. DmaW catalyzes the first step of ergot alkaloid biosynthesis by condensing dimethylallyl diphosphate (DMAP) and tryptophan to form 4-dimethylallyl-L-tryptophan. The second step is catalyzed by the methyltransferase easF that methylates 4-dimethylallyl-L-tryptophan in the presence of S-adenosyl-L-methionine, resulting in the formation of 4-dimethylallyl-L-abrine. The catalase easC and the FAD-dependent oxidoreductase easE then transform 4-dimethylallyl-L-abrine to chanoclavine-I which is further oxidized by easD in the presence of NAD(+), resulting in the formation of chanoclavine-I aldehyde. Chanoclavine-I aldehyde is the precursor of ergoamides and ergopeptines in Clavicipitaceae, and clavine-type alcaloids such as fumiclavine in Trichocomaceae. However, the metabolites downstream of chanoclavine-I aldehyde in Arthrodermataceae have not been identified yet. The polypeptide is Catalase easC (Arthroderma otae (strain ATCC MYA-4605 / CBS 113480) (Microsporum canis)).